The sequence spans 283 residues: Bifunctional protein FolD (283 aa).

Residues 164-166 (GRS), serine 189, and threonine 230 contribute to the NADP(+) site.

This sequence belongs to the tetrahydrofolate dehydrogenase/cyclohydrolase family. As to quaternary structure, homodimer.

The catalysed reaction is (6R)-5,10-methylene-5,6,7,8-tetrahydrofolate + NADP(+) = (6R)-5,10-methenyltetrahydrofolate + NADPH. It catalyses the reaction (6R)-5,10-methenyltetrahydrofolate + H2O = (6R)-10-formyltetrahydrofolate + H(+). The protein operates within one-carbon metabolism; tetrahydrofolate interconversion. In terms of biological role, catalyzes the oxidation of 5,10-methylenetetrahydrofolate to 5,10-methenyltetrahydrofolate and then the hydrolysis of 5,10-methenyltetrahydrofolate to 10-formyltetrahydrofolate. The sequence is that of Bifunctional protein FolD from Dictyoglomus thermophilum (strain ATCC 35947 / DSM 3960 / H-6-12).